Reading from the N-terminus, the 775-residue chain is Aconitate hydratase, mitochondrial (775 aa).

Residues 1 to 25 (MLTTLARASAMLLGARGFASAADLD) constitute a mitochondrion transit peptide. Residues Q95 and 188–190 (DSH) each bind substrate. The N-linked (GlcNAc...) asparagine glycan is linked to N337. Position 381 (C381) interacts with [4Fe-4S] cluster. The N-linked (GlcNAc...) asparagine glycan is linked to N383. C444 and C447 together coordinate [4Fe-4S] cluster. R470 is a binding site for substrate. N471 carries an N-linked (GlcNAc...) asparagine glycan. Residues R475 and R603 each coordinate substrate. A glycan (N-linked (GlcNAc...) asparagine) is linked at N608. Residue 666–667 (SR) coordinates substrate. Residues N754 and N763 are each glycosylated (N-linked (GlcNAc...) asparagine).

It belongs to the aconitase/IPM isomerase family. Monomer. [4Fe-4S] cluster is required as a cofactor.

It is found in the mitochondrion. The catalysed reaction is citrate = D-threo-isocitrate. The protein operates within carbohydrate metabolism; tricarboxylic acid cycle; isocitrate from oxaloacetate: step 2/2. Catalyzes the isomerization of citrate to isocitrate via cis-aconitate. This chain is Aconitate hydratase, mitochondrial, found in Arthroderma benhamiae (strain ATCC MYA-4681 / CBS 112371) (Trichophyton mentagrophytes).